A 60-amino-acid chain; its full sequence is uncharacterized protein (60 aa).

The chain crosses the membrane as a helical span at residues F33 to L55.

The protein belongs to the HHV-5 UL2 protein family.

The protein localises to the host membrane. This is an uncharacterized protein from Human cytomegalovirus (strain AD169) (HHV-5).